Reading from the N-terminus, the 684-residue chain is Beta-taxilin (684 aa).

Polar residues predominate over residues 1 to 26 (MEANHSEQLSAERQSTPPGDSSSLPS). Residues 1–132 (MEANHSEQLS…KEPVSNKEQK (132 aa)) form a disordered region. Residues 45 to 64 (PEKEASVHPDISEELNRQLE) are compositionally biased toward basic and acidic residues. The span at 93–107 (ESPDNEDGDCEETTE) shows a compositional bias: acidic residues. Coiled-coil stretches lie at residues 135–351 (KKIL…VLKE) and 378–467 (NEVF…SEKD). Over residues 458–475 (IRDAEISEKDDQSQHNSD) the composition is skewed to basic and acidic residues. 3 disordered regions span residues 458–485 (IRDA…VSVD), 514–632 (ESTP…DVPA), and 646–684 (PACE…EGVD). Phosphoserine occurs at positions 474 and 483. Over residues 514–524 (ESTPHQSKETQ) the composition is skewed to basic and acidic residues. Polar residues predominate over residues 613 to 622 (QAPQAPTEAS).

This sequence belongs to the taxilin family. Binds to the C-terminal coiled coil region of syntaxin family members STX1A, STX3A and STX4A. Has a preference for STX1A. Expressed in skeletal muscle.

Functionally, promotes motor nerve regeneration. May be involved in intracellular vesicle traffic. The protein is Beta-taxilin (TXLNB) of Homo sapiens (Human).